The sequence spans 376 residues: Succinyl-diaminopimelate desuccinylase (376 aa).

Zn(2+) is bound at residue His74. Asp76 is an active-site residue. Position 105 (Asp105) interacts with Zn(2+). Glu135 functions as the Proton acceptor in the catalytic mechanism. 3 residues coordinate Zn(2+): Glu136, Glu164, and His349.

This sequence belongs to the peptidase M20A family. DapE subfamily. Homodimer. Requires Zn(2+) as cofactor. Co(2+) serves as cofactor.

It carries out the reaction N-succinyl-(2S,6S)-2,6-diaminopimelate + H2O = (2S,6S)-2,6-diaminopimelate + succinate. It participates in amino-acid biosynthesis; L-lysine biosynthesis via DAP pathway; LL-2,6-diaminopimelate from (S)-tetrahydrodipicolinate (succinylase route): step 3/3. Catalyzes the hydrolysis of N-succinyl-L,L-diaminopimelic acid (SDAP), forming succinate and LL-2,6-diaminopimelate (DAP), an intermediate involved in the bacterial biosynthesis of lysine and meso-diaminopimelic acid, an essential component of bacterial cell walls. The protein is Succinyl-diaminopimelate desuccinylase of Zymomonas mobilis subsp. mobilis (strain ATCC 31821 / ZM4 / CP4).